Reading from the N-terminus, the 311-residue chain is 4-hydroxy-tetrahydrodipicolinate synthase (311 aa).

A pyruvate-binding site is contributed by Thr51. Tyr140 acts as the Proton donor/acceptor in catalysis. Lys168 acts as the Schiff-base intermediate with substrate in catalysis. Ile209 is a pyruvate binding site.

The protein belongs to the DapA family. Homotetramer; dimer of dimers.

The protein resides in the cytoplasm. The enzyme catalyses L-aspartate 4-semialdehyde + pyruvate = (2S,4S)-4-hydroxy-2,3,4,5-tetrahydrodipicolinate + H2O + H(+). The protein operates within amino-acid biosynthesis; L-lysine biosynthesis via DAP pathway; (S)-tetrahydrodipicolinate from L-aspartate: step 3/4. Its function is as follows. Catalyzes the condensation of (S)-aspartate-beta-semialdehyde [(S)-ASA] and pyruvate to 4-hydroxy-tetrahydrodipicolinate (HTPA). In Streptococcus pneumoniae (strain Hungary19A-6), this protein is 4-hydroxy-tetrahydrodipicolinate synthase.